The primary structure comprises 875 residues: Probable ubiquitin carboxyl-terminal hydrolase 7 (875 aa).

The UBP-type zinc-finger motif lies at 54-167; sequence KECSHLKKGV…RDVQQFICSN (114 aa). Zn(2+)-binding residues include Cys56, His58, Cys83, Cys86, Cys101, Cys104, Cys109, His116, His120, His127, Cys140, and Cys143. Residues 208–875 enclose the USP domain; that stretch reads PGLKNLGATC…EAYMLFYERV (668 aa). Residue Cys217 is the Nucleophile of the active site. Phosphoserine is present on residues Ser333 and Ser337. Residues 396-486 are disordered; it reads YSKELSQSSD…ASPKKEVLKS (91 aa). Positions 401–438 are enriched in low complexity; that stretch reads SQSSDSSQHQHDSFLPANSSPLAASSTKSLPSSELLDS. The span at 473–484 shows a compositional bias: basic and acidic residues; that stretch reads NHEEASPKKEVL. Ser486 and Ser493 each carry phosphoserine. Over residues 575–586 the composition is skewed to basic residues; it reads RSRFSRSPKKSS. Positions 575 to 628 are disordered; that stretch reads RSRFSRSPKKSSVKIVVDNANDDTDQAPTTNSSSLNENLLGGHASENDKSLKQS. The segment covering 600–611 has biased composition (polar residues); the sequence is QAPTTNSSSLNE. Ser645 is modified (phosphoserine). The Proton acceptor role is filled by His812.

This sequence belongs to the peptidase C19 family.

It catalyses the reaction Thiol-dependent hydrolysis of ester, thioester, amide, peptide and isopeptide bonds formed by the C-terminal Gly of ubiquitin (a 76-residue protein attached to proteins as an intracellular targeting signal).. This is Probable ubiquitin carboxyl-terminal hydrolase 7 (ubp7) from Schizosaccharomyces pombe (strain 972 / ATCC 24843) (Fission yeast).